The primary structure comprises 595 residues: MFS-type efflux pump MFS2 (595 aa).

N-linked (GlcNAc...) asparagine glycosylation occurs at Asn-62. The next 12 helical transmembrane spans lie at 69 to 89, 106 to 126, 136 to 156, 166 to 186, 197 to 217, 225 to 245, 301 to 321, 336 to 356, 381 to 401, 409 to 429, 442 to 462, and 478 to 498; these read WSIT…SSAY, VITL…LIWA, LLFF…AGSP, FFAG…IADM, GIFA…GGFL, WVEG…SIFL, PIVL…YMLF, PGIG…AMVI, LPVA…FAWT, IVSI…FLSL, ASVL…FPLF, and IPAF…IYGA.

This sequence belongs to the major facilitator superfamily. DHA1 family. Polyamines/proton antiporter (TC 2.A.1.2.16) subfamily.

The protein resides in the cell membrane. In terms of biological role, MFS-type efflux pump involved in the modulation susceptibility to fluconazole and voriconazole, 2 azoles with similar molecular structure. The protein is MFS-type efflux pump MFS2 of Trichophyton rubrum (strain ATCC MYA-4607 / CBS 118892) (Athlete's foot fungus).